The chain runs to 255 residues: tRNA (guanine-N(7)-)-methyltransferase (255 aa).

The segment at methionine 1–asparagine 30 is disordered. A compositionally biased stretch (acidic residues) spans alanine 17–aspartate 27. Residues glutamate 86, glutamate 111, aspartate 138, and aspartate 161 each contribute to the S-adenosyl-L-methionine site. The active site involves aspartate 161. Substrate contacts are provided by residues lysine 165, aspartate 197, and threonine 232 to glutamate 235.

This sequence belongs to the class I-like SAM-binding methyltransferase superfamily. TrmB family.

The catalysed reaction is guanosine(46) in tRNA + S-adenosyl-L-methionine = N(7)-methylguanosine(46) in tRNA + S-adenosyl-L-homocysteine. It functions in the pathway tRNA modification; N(7)-methylguanine-tRNA biosynthesis. In terms of biological role, catalyzes the formation of N(7)-methylguanine at position 46 (m7G46) in tRNA. The chain is tRNA (guanine-N(7)-)-methyltransferase from Burkholderia vietnamiensis (strain G4 / LMG 22486) (Burkholderia cepacia (strain R1808)).